Consider the following 316-residue polypeptide: Low affinity immunoglobulin gamma Fc region receptor II-a (316 aa).

Positions 1-35 (MAMETQMSQNVCPRNLWLLQPLTVLLLLASADSQA) are cleaved as a signal peptide. Residues 36–216 (APPKAVLKLE…PSVGSSSPVG (181 aa)) are Extracellular-facing. Ig-like C2-type domains lie at 38 to 117 (PKAV…VHLT) and 121 to 203 (EWLV…VTIT). 2 cysteine pairs are disulfide-bonded: cysteine 61–cysteine 103 and cysteine 142–cysteine 186. Asparagine 96, asparagine 170, and asparagine 177 each carry an N-linked (GlcNAc...) asparagine glycan. Residues 217–239 (IIVAVVIATAVAAIVAAVVALIY) traverse the membrane as a helical segment. The Cytoplasmic portion of the chain corresponds to 240 to 316 (CRKKRISANS…PPNDHVNSNN (77 aa)). Tyrosine 287 and tyrosine 303 each carry phosphotyrosine; by SRC-type Tyr-kinases.

In terms of assembly, interacts with INPP5D/SHIP1 and INPPL1/SHIP2, regulating its function. Interacts with APCS and FGR. Interacts with HCK. Phosphorylated by SRC-type Tyr-kinases such as HCK, LYN, BLK, FYN and SYK.

It localises to the cell membrane. Binds to the Fc region of immunoglobulins gamma. Low affinity receptor. By binding to IgG it initiates cellular responses against pathogens and soluble antigens. Promotes phagocytosis of opsonized antigens. The polypeptide is Low affinity immunoglobulin gamma Fc region receptor II-a (FCGR2A) (Pan troglodytes (Chimpanzee)).